Here is a 452-residue protein sequence, read N- to C-terminus: Bifunctional protein GlmU (452 aa).

The pyrophosphorylase stretch occupies residues 1 to 218; sequence MKVLILAAGL…IVEVSGVNDR (218 aa). UDP-N-acetyl-alpha-D-glucosamine is bound by residues 6–9, Lys-20, Gln-68, 73–74, 95–97, Gly-134, Glu-147, Asn-162, and Asn-216; these read LAAG, GT, and YGD. Asp-97 is a binding site for Mg(2+). Asn-216 contacts Mg(2+). Residues 219–239 form a linker region; the sequence is IQLAQLETIAKQRILEKLMLS. The N-acetyltransferase stretch occupies residues 240 to 452; that stretch reads GVTIVDPNST…EELKNADHKE (213 aa). UDP-N-acetyl-alpha-D-glucosamine is bound by residues Arg-321 and Lys-339. His-351 functions as the Proton acceptor in the catalytic mechanism. Residues Tyr-354 and Asn-365 each contribute to the UDP-N-acetyl-alpha-D-glucosamine site. Acetyl-CoA contacts are provided by residues Ala-368, 374 to 375, Ser-393, Ala-411, and Arg-428; that span reads NY.

The protein in the N-terminal section; belongs to the N-acetylglucosamine-1-phosphate uridyltransferase family. This sequence in the C-terminal section; belongs to the transferase hexapeptide repeat family. Homotrimer. Requires Mg(2+) as cofactor.

The protein resides in the cytoplasm. It carries out the reaction alpha-D-glucosamine 1-phosphate + acetyl-CoA = N-acetyl-alpha-D-glucosamine 1-phosphate + CoA + H(+). It catalyses the reaction N-acetyl-alpha-D-glucosamine 1-phosphate + UTP + H(+) = UDP-N-acetyl-alpha-D-glucosamine + diphosphate. Its pathway is nucleotide-sugar biosynthesis; UDP-N-acetyl-alpha-D-glucosamine biosynthesis; N-acetyl-alpha-D-glucosamine 1-phosphate from alpha-D-glucosamine 6-phosphate (route II): step 2/2. It participates in nucleotide-sugar biosynthesis; UDP-N-acetyl-alpha-D-glucosamine biosynthesis; UDP-N-acetyl-alpha-D-glucosamine from N-acetyl-alpha-D-glucosamine 1-phosphate: step 1/1. The protein operates within bacterial outer membrane biogenesis; LPS lipid A biosynthesis. In terms of biological role, catalyzes the last two sequential reactions in the de novo biosynthetic pathway for UDP-N-acetylglucosamine (UDP-GlcNAc). The C-terminal domain catalyzes the transfer of acetyl group from acetyl coenzyme A to glucosamine-1-phosphate (GlcN-1-P) to produce N-acetylglucosamine-1-phosphate (GlcNAc-1-P), which is converted into UDP-GlcNAc by the transfer of uridine 5-monophosphate (from uridine 5-triphosphate), a reaction catalyzed by the N-terminal domain. This chain is Bifunctional protein GlmU, found in Fervidobacterium nodosum (strain ATCC 35602 / DSM 5306 / Rt17-B1).